The sequence spans 593 residues: ETS-related transcription factor Elf-2 (593 aa).

Serine 107 carries the post-translational modification Phosphoserine. The segment at 146–201 (VEVSTEESEPMDTSPIPTSPDSHEPMKKKKVGRKPKTQQSPISNGSPELGIKKKPR) is disordered. Over residues 171–181 (MKKKKVGRKPK) the composition is skewed to basic residues. Threonine 182 carries the post-translational modification Phosphothreonine. The span at 182–191 (TQQSPISNGS) shows a compositional bias: polar residues. Residues serine 185 and serine 191 each carry the phosphoserine modification. The ETS DNA-binding region spans 208–290 (TYLWEFLLDL…EGQRLVYQFK (83 aa)). A phosphoserine mark is found at serine 363 and serine 372. Threonine 376 carries the phosphothreonine modification. A Phosphoserine modification is found at serine 430. Arginine 494 carries the omega-N-methylarginine modification. At threonine 521 the chain carries Phosphothreonine. A Glycyl lysine isopeptide (Lys-Gly) (interchain with G-Cter in SUMO2) cross-link involves residue lysine 536.

The protein belongs to the ETS family. As to quaternary structure, interacts with the LIM domains of LMO2. Interacts via its N-terminal region with RUNX1. In terms of tissue distribution, expressed in all fetal and adult tissues examined. Among fetal tissues, highest levels of expression detected in heart, lung, liver and kidney, and lower levels in brain. Among adult tissues, highest levels of expression detected in heart, placenta, lung, skeletal muscle, spleen, thymus, testis and ovary. Moderate expression in prostate, small intestine, kidney, liver and pancreas, and weak expression in colon, brain and peripheral blood lymphocytes.

It is found in the nucleus. Functionally, isoform 1 transcriptionally activates the LYN and BLK promoters and acts synergistically with RUNX1 to transactivate the BLK promoter. Its function is as follows. Isoform 2 may function in repression of RUNX1-mediated transactivation. This is ETS-related transcription factor Elf-2 from Homo sapiens (Human).